Here is a 297-residue protein sequence, read N- to C-terminus: MGSIRTRLLWLCLLMLLALLHKSGSQDLTCMVHPSRVDWTQTFNGTCLNFSGLGLSLPRSPLQASHAQVLDLSKNGLQVLPGAFFDKLEKLQTLIVTHNQLDSVDRSLALRCDLELKADCSCGLASWYALRQNCSGQQQLLCLHPATEAPRNLSTFLQVSCPPSWGPGTIGALVAGTISLAVAVSGSVLAWRLLRRRRRASEHSLSKAQMSPHDIPKPVTDFLPRYSSRRPGPKAPDSPPSRFTMDYENVFIGQPAEDCSWSAARNSPSGDSDCYMNYRSVDQDSQPVYCNLESLGR.

The N-terminal stretch at 1–25 (MGSIRTRLLWLCLLMLLALLHKSGS) is a signal peptide. The Extracellular portion of the chain corresponds to 26-169 (QDLTCMVHPS…SCPPSWGPGT (144 aa)). Residues Asn44 and Asn49 are each glycosylated (N-linked (GlcNAc...) asparagine). LRR repeat units follow at residues 66 to 89 (HAQV…DKLE) and 90 to 113 (KLQT…LRCD). Residues Asn133 and Asn152 are each glycosylated (N-linked (GlcNAc...) asparagine). A helical membrane pass occupies residues 170–190 (IGALVAGTISLAVAVSGSVLA). At 191 to 297 (WRLLRRRRRA…VYCNLESLGR (107 aa)) the chain is on the cytoplasmic side. A disordered region spans residues 202–244 (EHSLSKAQMSPHDIPKPVTDFLPRYSSRRPGPKAPDSPPSRFT). A phosphoserine mark is found at Ser211, Ser238, and Ser267. The residue at position 289 (Tyr289) is a Phosphotyrosine.

As to quaternary structure, interacts with RIGI. Interacts with SQSTM1. Interacts with p65/RELA; this interaction promotes the degradation of RELA through autophagy.

It is found in the membrane. The protein resides in the cytoplasm. In terms of biological role, plays a role in the inhibition of RLR-mediated type I interferon signaling pathway by targeting RIGI for autophagic degradation. Interacts specifically with ISG15-associated RIGI to promote interaction between RIGI and the autophagic cargo receptor p62/SQSTM1 to mediate RIGI degradation via selective autophagy. Plays also a role in the inhibition of NF-kappa-B signaling pathway and inflammatory response by promoting the degradation of p65/RELA. This is Leucine-rich repeat-containing protein 25 (Lrrc25) from Mus musculus (Mouse).